Consider the following 335-residue polypeptide: MAVKIGINGFGRIGRNVFRAALKNDNVEVVAINDLTDANMLAHLLKYDSVHGKLDAEVVVDGSNLVVNGKTIEISAERDPAQLSWGKQGVEIVVESTGFFTKRADAAKHLEAGAKKVIISAPASDEDITIVMGVNEDKYDAANHNVISNASCTTNCLAPFAKVLNDKFGLKRGMMTTVHSYTNDQQILDLPHKDYRRARAAAENIIPTSTGAAKAVSLVLPELKGKLNGGAMRVPTPNVSLVDLVAELDKEVTVEDVNNALKEAAEGDLKGILGYSEEPLVSGDYNGNINSSTIDALSTMVMEGNMVKVISWYDNESGYSNRVVDLAQYIAAKGL.

NAD(+) contacts are provided by residues 12 to 13, Asp-34, Arg-78, and Ser-120; that span reads RI. Residues 151–153 and Thr-182 each bind D-glyceraldehyde 3-phosphate; that span reads SCT. The Nucleophile role is filled by Cys-152. Asn-183 provides a ligand contact to NAD(+). D-glyceraldehyde 3-phosphate is bound by residues Arg-197, 210–211, and Arg-233; that span reads TG. Residue Asn-315 coordinates NAD(+).

Belongs to the glyceraldehyde-3-phosphate dehydrogenase family. In terms of assembly, homotetramer.

The protein localises to the cytoplasm. The catalysed reaction is D-glyceraldehyde 3-phosphate + phosphate + NAD(+) = (2R)-3-phospho-glyceroyl phosphate + NADH + H(+). It functions in the pathway carbohydrate degradation; glycolysis; pyruvate from D-glyceraldehyde 3-phosphate: step 1/5. Catalyzes the oxidative phosphorylation of glyceraldehyde 3-phosphate (G3P) to 1,3-bisphosphoglycerate (BPG) using the cofactor NAD. The first reaction step involves the formation of a hemiacetal intermediate between G3P and a cysteine residue, and this hemiacetal intermediate is then oxidized to a thioester, with concomitant reduction of NAD to NADH. The reduced NADH is then exchanged with the second NAD, and the thioester is attacked by a nucleophilic inorganic phosphate to produce BPG. This chain is Glyceraldehyde-3-phosphate dehydrogenase (gap), found in Priestia megaterium (strain DSM 319 / IMG 1521) (Bacillus megaterium).